A 710-amino-acid polypeptide reads, in one-letter code: Polyribonucleotide nucleotidyltransferase (710 aa).

2 residues coordinate Mg(2+): D489 and D495. Residues 556–615 form the KH domain; sequence PKIDTIKIDVDKIKVVIGKGGETIDKIIAETGVKIDIDDEGNVSIYSSDQAAIDRTKEII. The 69-residue stretch at 625 to 693 folds into the S1 motif domain; sequence GEVYHAKVVR…EKGRVDASMK (69 aa). Positions 691-710 are disordered; sequence SMKALIPRPPKPEKKEEKHD. A compositionally biased stretch (basic and acidic residues) spans 700-710; it reads PKPEKKEEKHD.

Belongs to the polyribonucleotide nucleotidyltransferase family. Mg(2+) serves as cofactor.

It localises to the cytoplasm. The enzyme catalyses RNA(n+1) + phosphate = RNA(n) + a ribonucleoside 5'-diphosphate. Its function is as follows. Involved in mRNA degradation. Catalyzes the phosphorolysis of single-stranded polyribonucleotides processively in the 3'- to 5'-direction. The chain is Polyribonucleotide nucleotidyltransferase from Streptococcus pyogenes serotype M49 (strain NZ131).